The primary structure comprises 175 residues: Crossover junction endodeoxyribonuclease RuvC (175 aa).

Residues Asp8, Glu68, and Asp140 contribute to the active site. Residues Asp8, Glu68, and Asp140 each contribute to the Mg(2+) site.

Belongs to the RuvC family. As to quaternary structure, homodimer which binds Holliday junction (HJ) DNA. The HJ becomes 2-fold symmetrical on binding to RuvC with unstacked arms; it has a different conformation from HJ DNA in complex with RuvA. In the full resolvosome a probable DNA-RuvA(4)-RuvB(12)-RuvC(2) complex forms which resolves the HJ. It depends on Mg(2+) as a cofactor.

The protein resides in the cytoplasm. It carries out the reaction Endonucleolytic cleavage at a junction such as a reciprocal single-stranded crossover between two homologous DNA duplexes (Holliday junction).. The RuvA-RuvB-RuvC complex processes Holliday junction (HJ) DNA during genetic recombination and DNA repair. Endonuclease that resolves HJ intermediates. Cleaves cruciform DNA by making single-stranded nicks across the HJ at symmetrical positions within the homologous arms, yielding a 5'-phosphate and a 3'-hydroxyl group; requires a central core of homology in the junction. The consensus cleavage sequence is 5'-(A/T)TT(C/G)-3'. Cleavage occurs on the 3'-side of the TT dinucleotide at the point of strand exchange. HJ branch migration catalyzed by RuvA-RuvB allows RuvC to scan DNA until it finds its consensus sequence, where it cleaves and resolves the cruciform DNA. This is Crossover junction endodeoxyribonuclease RuvC from Pseudomonas fluorescens (strain Pf0-1).